The primary structure comprises 798 residues: Protocadherin beta-10 (798 aa).

An N-terminal signal peptide occupies residues 1 to 26; sequence MAVRELCFSRQRQVLFLFLFWGVSLA. At 27–690 the chain is on the extracellular side; it reads GSGFGRYSVT…AQADLLTVYL (664 aa). Cadherin domains are found at residues 35–133, 138–242, 247–347, 352–451, and 456–561; these read VTEE…APVF, TVLK…APQF, YETQ…PPEL, FSNS…APAF, and YTLF…SPFV. N169 carries an N-linked (GlcNAc...) asparagine glycan. N-linked (GlcNAc...) asparagine glycosylation is found at N418 and N436. Residue N567 is glycosylated (N-linked (GlcNAc...) asparagine). The Cadherin 6 domain maps to 568 to 671; it reads GSAPCTELVP…LVDGFSQPYL (104 aa). Residues 691–711 traverse the membrane as a helical segment; sequence VVALASVSSLFLFSVLLFVAV. The Cytoplasmic portion of the chain corresponds to 712–798; it reads RLCRRSRAAS…FRNSFGFNIQ (87 aa).

It localises to the cell membrane. In terms of biological role, potential calcium-dependent cell-adhesion protein. May be involved in the establishment and maintenance of specific neuronal connections in the brain. This Pan troglodytes (Chimpanzee) protein is Protocadherin beta-10 (PCDHB10).